Here is a 259-residue protein sequence, read N- to C-terminus: Acyl-[acyl-carrier-protein]--UDP-N-acetylglucosamine O-acyltransferase (259 aa).

It belongs to the transferase hexapeptide repeat family. LpxA subfamily. In terms of assembly, homotrimer.

Its subcellular location is the cytoplasm. It catalyses the reaction a (3R)-hydroxyacyl-[ACP] + UDP-N-acetyl-alpha-D-glucosamine = a UDP-3-O-[(3R)-3-hydroxyacyl]-N-acetyl-alpha-D-glucosamine + holo-[ACP]. The protein operates within glycolipid biosynthesis; lipid IV(A) biosynthesis; lipid IV(A) from (3R)-3-hydroxytetradecanoyl-[acyl-carrier-protein] and UDP-N-acetyl-alpha-D-glucosamine: step 1/6. Its function is as follows. Involved in the biosynthesis of lipid A, a phosphorylated glycolipid that anchors the lipopolysaccharide to the outer membrane of the cell. In Psychrobacter arcticus (strain DSM 17307 / VKM B-2377 / 273-4), this protein is Acyl-[acyl-carrier-protein]--UDP-N-acetylglucosamine O-acyltransferase.